The sequence spans 326 residues: Structural protein ORF326a (326 aa).

The interval 1-28 is disordered; that stretch reads MSTTFRGKKEEEEEEEEEKEEKEEELFN. The segment covering 11 to 26 has biased composition (acidic residues); the sequence is EEEEEEEEKEEKEEEL.

It localises to the virion. This Acidianus two-tailed virus (ATV) protein is Structural protein ORF326a.